We begin with the raw amino-acid sequence, 273 residues long: Zinc finger protein 80 (273 aa).

2 consecutive C2H2-type zinc fingers follow at residues 49–71 and 77–99; these read YKCK…HQIH and YECQ…MRIH. A C2H2-type 3; atypical zinc finger spans residues 105–127; the sequence is CKCVECGKVFNRRSHLLCYRQIH. 4 consecutive C2H2-type zinc fingers follow at residues 133–155, 161–183, 189–211, and 217–239; these read YECS…RMTH, FGCK…MKIH, YKCG…SMTH, and YECK…TRSH.

This sequence belongs to the krueppel C2H2-type zinc-finger protein family.

It localises to the nucleus. Its function is as follows. May be involved in transcriptional regulation. In Gorilla gorilla gorilla (Western lowland gorilla), this protein is Zinc finger protein 80 (ZNF80).